The sequence spans 78 residues: Large ribosomal subunit protein bL28 (78 aa).

Belongs to the bacterial ribosomal protein bL28 family.

This is Large ribosomal subunit protein bL28 from Synechococcus sp. (strain JA-2-3B'a(2-13)) (Cyanobacteria bacterium Yellowstone B-Prime).